The following is an 855-amino-acid chain: Replication factor C small subunit (855 aa).

A DOD-type homing endonuclease domain is found at 185–308; it reads WLGYFLGGGY…IAYALAGFGI (124 aa).

It belongs to the activator 1 small subunits family. RfcS subfamily. Heteromultimer composed of small subunits (RfcS) and large subunits (RfcL). Post-translationally, this protein undergoes a protein self splicing that involves a post-translational excision of the intervening region (intein) followed by peptide ligation.

Its function is as follows. Part of the RFC clamp loader complex which loads the PCNA sliding clamp onto DNA. The chain is Replication factor C small subunit (rfcS) from Pyrococcus horikoshii (strain ATCC 700860 / DSM 12428 / JCM 9974 / NBRC 100139 / OT-3).